A 192-amino-acid polypeptide reads, in one-letter code: Transcription termination/antitermination protein NusG (192 aa).

Residues 140 to 168 enclose the KOW domain; sequence VGEIVIVTDGPFETFTGTVEEIDQEKNRL.

It belongs to the NusG family.

Participates in transcription elongation, termination and antitermination. The sequence is that of Transcription termination/antitermination protein NusG from Rickettsia felis (strain ATCC VR-1525 / URRWXCal2) (Rickettsia azadi).